The primary structure comprises 417 residues: Guanine nucleotide-exchange factor SEC12 (417 aa).

The Cytoplasmic segment spans residues 1-388; that stretch reads MGRRRGVELY…QLHLLPSRRS (388 aa). 3'-nitrotyrosine is present on Tyr10. The tract at residues 101–135 is disordered; the sequence is KGSKAEKSGSKEQGPRQRKGAPPAEKKSGAQVHPE. Residues 103–115 show a composition bias toward basic and acidic residues; it reads SKAEKSGSKEQGP. WD repeat units follow at residues 152–191, 194–232, and 298–337; these read SNEP…KVLE, AHEG…TQLQ, and CGHE…RLYY. The chain crosses the membrane as a helical span at residues 389–409; it reads VPVWLLLLLCVGLIIVTILLL. The Lumenal segment spans residues 410-417; the sequence is QTAFPGFL.

In terms of assembly, interacts with SAR1B (GDP-bound form). Interacts with MIA2; recruits PREB to endoplasmic reticulum exit sites. Interacts with CIDEB; facilitating loading of SCAP-SREBP into COPII vesicles.

The protein localises to the endoplasmic reticulum membrane. It localises to the nucleus. In terms of biological role, guanine nucleotide exchange factor (GEF) that regulates the assembly of the coat protein complex II/COPII in endoplasmic reticulum (ER) to Golgi vesicle-mediated transport. Selectively activates SAR1A and SAR1B by promoting the exchange of guanosine diphosphate (GDP) for guanosine triphosphate (GTP) in these small GTPases. In their activated GTP-bound state, SAR1A and SAR1B insert into the membrane of the endoplasmic reticulum where they recruit the remainder of the coat protein complex II/COPII which is responsible for both the sorting of proteins and the deformation and budding of membranes into vesicles destined to the Golgi. Functionally, was first identified based on its probable role in the regulation of pituitary gene transcription. Binds to the prolactin gene (PRL) promoter and seems to activate transcription. This chain is Guanine nucleotide-exchange factor SEC12, found in Mus musculus (Mouse).